We begin with the raw amino-acid sequence, 203 residues long: Large ribosomal subunit protein bL25 (203 aa).

This sequence belongs to the bacterial ribosomal protein bL25 family. CTC subfamily. In terms of assembly, part of the 50S ribosomal subunit; part of the 5S rRNA/L5/L18/L25 subcomplex. Contacts the 5S rRNA. Binds to the 5S rRNA independently of L5 and L18.

This is one of the proteins that binds to the 5S RNA in the ribosome where it forms part of the central protuberance. This chain is Large ribosomal subunit protein bL25, found in Chlorobium phaeovibrioides (strain DSM 265 / 1930) (Prosthecochloris vibrioformis (strain DSM 265)).